The primary structure comprises 338 residues: DNA-directed RNA polymerase subunit alpha (338 aa).

Residues 1-234 (MIHKNWAELI…DQLSIFVNFD (234 aa)) are alpha N-terminal domain (alpha-NTD). An alpha C-terminal domain (alpha-CTD) region spans residues 250 to 338 (FNPLLLKKVD…DLAKKFEDAF (89 aa)).

It belongs to the RNA polymerase alpha chain family. As to quaternary structure, homodimer. The RNAP catalytic core consists of 2 alpha, 1 beta, 1 beta' and 1 omega subunit. When a sigma factor is associated with the core the holoenzyme is formed, which can initiate transcription.

It carries out the reaction RNA(n) + a ribonucleoside 5'-triphosphate = RNA(n+1) + diphosphate. In terms of biological role, DNA-dependent RNA polymerase catalyzes the transcription of DNA into RNA using the four ribonucleoside triphosphates as substrates. The sequence is that of DNA-directed RNA polymerase subunit alpha from Ruegeria pomeroyi (strain ATCC 700808 / DSM 15171 / DSS-3) (Silicibacter pomeroyi).